A 345-amino-acid chain; its full sequence is S-adenosylmethionine:tRNA ribosyltransferase-isomerase (345 aa).

This sequence belongs to the QueA family. As to quaternary structure, monomer.

The protein localises to the cytoplasm. The catalysed reaction is 7-aminomethyl-7-carbaguanosine(34) in tRNA + S-adenosyl-L-methionine = epoxyqueuosine(34) in tRNA + adenine + L-methionine + 2 H(+). It functions in the pathway tRNA modification; tRNA-queuosine biosynthesis. Functionally, transfers and isomerizes the ribose moiety from AdoMet to the 7-aminomethyl group of 7-deazaguanine (preQ1-tRNA) to give epoxyqueuosine (oQ-tRNA). The protein is S-adenosylmethionine:tRNA ribosyltransferase-isomerase of Anaeromyxobacter dehalogenans (strain 2CP-1 / ATCC BAA-258).